Here is a 955-residue protein sequence, read N- to C-terminus: Calsyntenin-2 (955 aa).

An N-terminal signal peptide occupies residues 1–20 (MLPGRLCWVPLLLALGVGSG). Topologically, residues 21–831 (SGGGGDSRQR…SIQHSSVVPS (811 aa)) are extracellular. Cadherin domains follow at residues 44–160 (IETS…APTF) and 161–280 (KEPA…MPLF). Residues asparagine 56 and asparagine 98 are each glycosylated (N-linked (GlcNAc...) asparagine). Residues asparagine 342, asparagine 374, asparagine 716, and asparagine 729 are each glycosylated (N-linked (GlcNAc...) asparagine). The chain crosses the membrane as a helical span at residues 832-852 (IATVVIIISVCMLVFVVAMGV). Residues 853–955 (YRVRIAHQHF…LEWDDSTLPY (103 aa)) lie on the Cytoplasmic side of the membrane. Residues 887–955 (PMEKHEGPGH…LEWDDSTLPY (69 aa)) are disordered. The segment covering 888–898 (MEKHEGPGHGE) has biased composition (basic and acidic residues). 2 stretches are compositionally biased toward acidic residues: residues 899-913 (DETEGEEEEEAEEEM) and 920-929 (DDSEEEEEEE).

The protein belongs to the calsyntenin family. Proteolytically processed under normal cellular conditions. A primary zeta-cleavage generates a large extracellular (soluble) N-terminal domain (sAlc) and a short C-terminal transmembrane fragment (CTF1). A secondary cleavage catalyzed by gamma-secretase within the transmembrane domain releases the beta-Alc-gamma chain in the extracellular milieu and produces an intracellular fragment (AlcICD). This processing is strongly suppressed in the tripartite complex formed with APBA2 and APP, which seems to prevent the association with PSEN1. In terms of tissue distribution, restricted to the brain.

It is found in the postsynaptic cell membrane. Its subcellular location is the endoplasmic reticulum membrane. The protein resides in the golgi apparatus membrane. The protein localises to the cell projection. It localises to the dendrite. Its function is as follows. Postsynaptic adhesion molecule that binds to presynaptic neurexins to mediate synapse formation, and which is involved in learning and memory. Promotes synapse development by acting as a cell adhesion molecule at the postsynaptic membrane, which associates with neurexin-alpha at the presynaptic membrane. The sequence is that of Calsyntenin-2 from Homo sapiens (Human).